Here is a 341-residue protein sequence, read N- to C-terminus: Calcium-binding protein 39 (341 aa).

Belongs to the Mo25 family. In terms of assembly, component of a trimeric complex composed of STK11/LKB1, STRAD (STRADA or STRADB) and CAB39/MO25 (CAB39/MO25alpha or CAB39L/MO25beta): the complex tethers STK11/LKB1 in the cytoplasm and stimulates its catalytic activity.

It is found in the cytoplasm. Functionally, component of a complex that binds and activates STK11/LKB1. In the complex, required to stabilize the interaction between CAB39/MO25 (CAB39/MO25alpha or CAB39L/MO25beta) and STK11/LKB1. This chain is Calcium-binding protein 39 (CAB39), found in Bos taurus (Bovine).